Consider the following 234-residue polypeptide: Peptidase E (234 aa).

Catalysis depends on charge relay system residues Ser123, Asp138, and His160.

The protein belongs to the peptidase S51 family.

The protein localises to the cytoplasm. It catalyses the reaction Dipeptidase E catalyzes the hydrolysis of dipeptides Asp-|-Xaa. It does not act on peptides with N-terminal Glu, Asn or Gln, nor does it cleave isoaspartyl peptides.. Hydrolyzes dipeptides containing N-terminal aspartate residues. May play a role in allowing the cell to use peptide aspartate to spare carbon otherwise required for the synthesis of the aspartate family of amino acids. In Actinobacillus pleuropneumoniae serotype 5b (strain L20), this protein is Peptidase E.